Consider the following 468-residue polypeptide: UDP-N-acetylmuramoyl-L-alanine--L-glutamate ligase (468 aa).

Position 122–128 (122–128) interacts with ATP; the sequence is GTKGKST.

This sequence belongs to the MurCDEF family. MurD2 subfamily.

It localises to the cytoplasm. The catalysed reaction is UDP-N-acetyl-alpha-D-muramoyl-L-alanine + L-glutamate + ATP = UDP-N-acetyl-alpha-D-muramoyl-L-alanyl-L-glutamate + ADP + phosphate + H(+). The protein operates within cell wall biogenesis; peptidoglycan biosynthesis. Cell wall formation. Catalyzes the addition of L-glutamate to the nucleotide precursor UDP-N-acetylmuramoyl-L-alanine. The polypeptide is UDP-N-acetylmuramoyl-L-alanine--L-glutamate ligase (Xanthomonas campestris pv. campestris (strain 8004)).